The chain runs to 571 residues: Potassium-transporting ATPase potassium-binding subunit (571 aa).

Transmembrane regions (helical) follow at residues Gly-5 to Gly-25, Leu-64 to Leu-84, Gly-136 to Ile-156, Leu-179 to Pro-199, Val-220 to Phe-240, Leu-254 to Phe-274, Trp-285 to Ala-305, Phe-330 to Val-350, Ile-375 to Phe-395, Met-421 to Val-441, Leu-488 to Gly-508, and Gly-527 to Phe-547.

It belongs to the KdpA family. As to quaternary structure, the system is composed of three essential subunits: KdpA, KdpB and KdpC.

It localises to the cell inner membrane. Its function is as follows. Part of the high-affinity ATP-driven potassium transport (or Kdp) system, which catalyzes the hydrolysis of ATP coupled with the electrogenic transport of potassium into the cytoplasm. This subunit binds the periplasmic potassium ions and delivers the ions to the membrane domain of KdpB through an intramembrane tunnel. This Methylorubrum extorquens (strain PA1) (Methylobacterium extorquens) protein is Potassium-transporting ATPase potassium-binding subunit.